The primary structure comprises 576 residues: Arginine--tRNA ligase (576 aa).

Residues Pro122 to His132 carry the 'HIGH' region motif.

It belongs to the class-I aminoacyl-tRNA synthetase family. Monomer.

It localises to the cytoplasm. The enzyme catalyses tRNA(Arg) + L-arginine + ATP = L-arginyl-tRNA(Arg) + AMP + diphosphate. This Thermobifida fusca (strain YX) protein is Arginine--tRNA ligase.